The primary structure comprises 291 residues: Pituitary-specific positive transcription factor 1 (291 aa).

Positions 5-13 match the 9aaTAD motif; that stretch reads AFTSADTFI. In terms of domain architecture, POU-specific spans 124–198; it reads MDSPEIRELE…ILSKWLEEAE (75 aa). Positions 214 to 273 form a DNA-binding region, homeobox; it reads KRKRRTTISIAAKDALERHFGEQNKPSSQEIMRMAEELNLEKEVVRVWFCNRRQREKRVK.

The protein belongs to the POU transcription factor family. Class-1 subfamily. Interacts with PITX1. Interacts with LHX3. Interacts with ELK1.

The protein localises to the nucleus. Transcription factor involved in the specification of the lactotrope, somatotrope, and thyrotrope phenotypes in the developing anterior pituitary. Specifically binds to the consensus sequence 5'-TAAAT-3'. Activates growth hormone and prolactin genes. The sequence is that of Pituitary-specific positive transcription factor 1 (POU1F1) from Homo sapiens (Human).